A 270-amino-acid chain; its full sequence is Probable septum site-determining protein MinC (270 aa).

The segment at 105–129 is disordered; the sequence is DRRAPSSKAADEAPVQQAEPAAPAA. Positions 116-129 are enriched in low complexity; sequence EAPVQQAEPAAPAA.

Belongs to the MinC family. As to quaternary structure, interacts with MinD and FtsZ.

Cell division inhibitor that blocks the formation of polar Z ring septums. Rapidly oscillates between the poles of the cell to destabilize FtsZ filaments that have formed before they mature into polar Z rings. Prevents FtsZ polymerization. The protein is Probable septum site-determining protein MinC of Burkholderia mallei (strain NCTC 10247).